Here is a 194-residue protein sequence, read N- to C-terminus: Ribosome maturation factor RimP (194 aa).

It belongs to the RimP family.

The protein localises to the cytoplasm. Its function is as follows. Required for maturation of 30S ribosomal subunits. The chain is Ribosome maturation factor RimP from Jannaschia sp. (strain CCS1).